The following is a 456-amino-acid chain: Tyrosinase-like protein 2 (456 aa).

The first 22 residues, Met-1 to Cys-22, serve as a signal peptide directing secretion. Positions 145, 154, 163, 295, 299, and 322 each coordinate Cu cation.

Requires Cu(2+) as cofactor. As to expression, prismatic layer of shell (at protein level).

It localises to the secreted. The chain is Tyrosinase-like protein 2 from Margaritifera margaritifera (Freshwater pearl mussel).